The chain runs to 569 residues: Cysteine--tRNA ligase CPS1 homolog, chloroplastic/mitochondrial (569 aa).

The transit peptide at 1 to 42 (MAAARRAAGLLPLLLSSPSRARLPHRQALALTPPLLRPHRLY) directs the protein to the chloroplast and mitochondrion. Cysteine 99 provides a ligand contact to Zn(2+). The 'HIGH' region motif lies at 101 to 111 (VTPYDDSHIGH). Zn(2+) contacts are provided by cysteine 279, histidine 304, and glutamate 308. The 'KMSKS' region signature appears at 336 to 340 (KMSKS). Lysine 339 contacts ATP.

Belongs to the class-I aminoacyl-tRNA synthetase family. It depends on Zn(2+) as a cofactor.

It localises to the plastid. The protein localises to the chloroplast. The protein resides in the mitochondrion. The enzyme catalyses tRNA(Cys) + L-cysteine + ATP = L-cysteinyl-tRNA(Cys) + AMP + diphosphate. In terms of biological role, nuclear genome-encoded factor required for normal assembly of chloroplast polysomes. In Oryza sativa subsp. japonica (Rice), this protein is Cysteine--tRNA ligase CPS1 homolog, chloroplastic/mitochondrial.